The chain runs to 362 residues: 3-isopropylmalate dehydrogenase (362 aa).

77–88 provides a ligand contact to NAD(+); it reads GPKWGTGAVRPE. Residues Arg95, Arg105, Arg134, and Asp223 each contribute to the substrate site. Mg(2+)-binding residues include Asp223, Asp248, and Asp252. NAD(+) is bound at residue 287-298; that stretch reads GSAPDLPPNKVN.

This sequence belongs to the isocitrate and isopropylmalate dehydrogenases family. Homodimer. Requires Mg(2+) as cofactor. Mn(2+) is required as a cofactor.

The protein resides in the cytoplasm. It catalyses the reaction (2R,3S)-3-isopropylmalate + NAD(+) = 4-methyl-2-oxopentanoate + CO2 + NADH. It participates in amino-acid biosynthesis; L-leucine biosynthesis; L-leucine from 3-methyl-2-oxobutanoate: step 3/4. Functionally, catalyzes the oxidation of 3-carboxy-2-hydroxy-4-methylpentanoate (3-isopropylmalate) to 3-carboxy-4-methyl-2-oxopentanoate. The product decarboxylates to 4-methyl-2 oxopentanoate. The protein is 3-isopropylmalate dehydrogenase (LEU2) of Blastobotrys adeninivorans (Yeast).